A 334-amino-acid polypeptide reads, in one-letter code: Probable fructose-bisphosphate aldolase class 1 (334 aa).

This sequence belongs to the class I fructose-bisphosphate aldolase family.

It carries out the reaction beta-D-fructose 1,6-bisphosphate = D-glyceraldehyde 3-phosphate + dihydroxyacetone phosphate. It participates in carbohydrate degradation; glycolysis; D-glyceraldehyde 3-phosphate and glycerone phosphate from D-glucose: step 4/4. The protein is Probable fructose-bisphosphate aldolase class 1 of Xanthomonas campestris pv. campestris (strain ATCC 33913 / DSM 3586 / NCPPB 528 / LMG 568 / P 25).